Consider the following 442-residue polypeptide: Thymidine phosphorylase (442 aa).

The protein belongs to the thymidine/pyrimidine-nucleoside phosphorylase family. Homodimer.

The enzyme catalyses thymidine + phosphate = 2-deoxy-alpha-D-ribose 1-phosphate + thymine. The protein operates within pyrimidine metabolism; dTMP biosynthesis via salvage pathway; dTMP from thymine: step 1/2. The enzymes which catalyze the reversible phosphorolysis of pyrimidine nucleosides are involved in the degradation of these compounds and in their utilization as carbon and energy sources, or in the rescue of pyrimidine bases for nucleotide synthesis. In Vibrio parahaemolyticus serotype O3:K6 (strain RIMD 2210633), this protein is Thymidine phosphorylase.